An 833-amino-acid polypeptide reads, in one-letter code: Zinc transporter ZIP10 (833 aa).

Positions 1–25 (MKVHIHTKFCLICLLTFIFHHCNHC) are cleaved as a signal peptide. The span at 30-48 (DHGPEELHRHHRGMTESES) shows a compositional bias: basic and acidic residues. Disordered stretches follow at residues 30–54 (DHGP…FSVQ) and 137–167 (AENH…IKAD). Positions 137–147 (AENHTTTSVTS) are enriched in polar residues. Positions 152-167 (KCDPEKEAAELPIKAD) are enriched in basic and acidic residues. 2 N-linked (GlcNAc...) asparagine glycosylation sites follow: Asn-191 and Asn-198. Residues 200–209 (SVAHSEHGEP) are compositionally biased toward basic and acidic residues. Disordered regions lie at residues 200-257 (SVAH…NHDH) and 271-335 (RVHS…EDDR). An N-linked (GlcNAc...) asparagine glycan is attached at Asn-218. A compositionally biased stretch (basic residues) spans 229-241 (VKVRRKEKGKRKK). Composition is skewed to basic and acidic residues over residues 281-315 (HLPE…EAPH) and 326-335 (SHKDQSEDDR). An N-linked (GlcNAc...) asparagine glycan is attached at Asn-341. 2 consecutive transmembrane segments (helical) span residues 413–433 (IISI…VPII) and 440–460 (FLLT…ALLH). A disordered region spans residues 466 to 485 (QGGHDHSHQHTHGHGHSHGH). Residues 497–517 (VLKGLVALGGIYLLFIIEHCI) form a helical membrane-spanning segment. Residues Thr-538 and Thr-555 each carry the phosphothreonine modification. Ser-593 is modified (phosphoserine). 4 helical membrane-spanning segments follow: residues 689–709 (AIGA…IAVF), 734–754 (IVYN…GTAV), 761–781 (ITLW…LVDM), and 803–823 (FILQ…IALY).

This sequence belongs to the ZIP transporter (TC 2.A.5) family. In terms of assembly, interacts with SLC39A6. This interaction triggers cells to undergo EMT and mitosis. Found in a complex with SLC39A6, SLC39A10 and with the 'Ser-727' phosphorylated form of STAT3 throughout mitosis. Found in a complex with SLC39A6, SLC39A10 and with NCAM1; this complex controls NCAM1 phosphorylation and integration into focal adhesion complexes during epithelial-tomesenchymal transition. Found in a complex with SLC39A6, SLC39A10 and with GSK3B that controls NCAM1 phosphorylation. Post-translationally, undergoes N-terminal ectodomain shedding. As to expression, expressed in the liver, kidney and brain.

It is found in the cell membrane. The protein resides in the apical cell membrane. The enzyme catalyses Zn(2+)(in) = Zn(2+)(out). Functionally, zinc-influx transporter. When associated with SLC39A6, the heterodimer formed by SLC39A10 and SLC39A6 mediates cellular zinc uptake to trigger cells to undergo epithelial-to-mesenchymal transition (EMT). mediates cellular zinc uptake to trigger cells to undergo epithelial-to-mesenchymal transition (EMT). SLC39A10-SLC39A6 heterodimers play also an essentiel role in initiating mitosis by importing zinc into cells to initiate a pathway resulting in the onset of mitosis. Plays an important for both mature B-cell maintenance and humoral immune responses. When associated with SLC39A10, the heterodimer controls NCAM1 phosphorylation and integration into focal adhesion complexes during EMT. This is Zinc transporter ZIP10 from Mus musculus (Mouse).